The sequence spans 141 residues: Hemoglobin subunit alpha-1/2 (141 aa).

The region spanning 1–141 is the Globin domain; sequence VLSPADKTNV…VSTVLTSKYR (141 aa). The residue at position 3 (Ser-3) is a Phosphoserine. Lys-7 is modified (N6-succinyllysine). The residue at position 8 (Thr-8) is a Phosphothreonine. Position 11 is an N6-succinyllysine (Lys-11). Residue Lys-16 is modified to N6-acetyllysine; alternate. At Lys-16 the chain carries N6-succinyllysine; alternate. Tyr-24 carries the post-translational modification Phosphotyrosine. Ser-35 is modified (phosphoserine). Lys-40 carries the N6-succinyllysine modification. Phosphoserine is present on Ser-49. Residue His-58 participates in O2 binding. Residue His-87 participates in heme b binding. Ser-102 carries the post-translational modification Phosphoserine. The residue at position 108 (Thr-108) is a Phosphothreonine. Ser-124 is modified (phosphoserine). Residues Thr-134 and Thr-137 each carry the phosphothreonine modification. Ser-138 carries the post-translational modification Phosphoserine.

The protein belongs to the globin family. In terms of assembly, heterotetramer of two alpha chains and two beta chains. In terms of tissue distribution, red blood cells.

Involved in oxygen transport from the lung to the various peripheral tissues. The polypeptide is Hemoglobin subunit alpha-1/2 (Mustela putorius (European polecat)).